The sequence spans 467 residues: NADH-quinone oxidoreductase subunit H (467 aa).

9 consecutive transmembrane segments (helical) span residues 18-38 (WWLVVIKAVFCFAFLMVTVLF), 88-108 (AVYVLAPIVAAIPAFMAIAVI), 131-151 (LPIAMLFILAVASVGIYGIVL), 172-192 (MISYEIAMGAAFASVFLYSGS), 206-226 (WYIVLLPVSFILYIVTMVGET), 256-276 (FMLAEYVNMVTVSAVATTLFL), 296-316 (WWPLLWFVVKVQLLLFFFIWL), 328-348 (LMKLGWKVLIPVSLVWLMLVA), and 363-383 (IALYIGGGVLVLLLLSFLVDM). A disordered region spans residues 389-467 (GKAADQPAET…PTDGKEASDG (79 aa)). Residues 418–430 (PVPPMPGQQVPPV) show a composition bias toward pro residues.

This sequence belongs to the complex I subunit 1 family. In terms of assembly, NDH-1 is composed of 14 different subunits. Subunits NuoA, H, J, K, L, M, N constitute the membrane sector of the complex.

The protein resides in the cell membrane. It catalyses the reaction a quinone + NADH + 5 H(+)(in) = a quinol + NAD(+) + 4 H(+)(out). Functionally, NDH-1 shuttles electrons from NADH, via FMN and iron-sulfur (Fe-S) centers, to quinones in the respiratory chain. The immediate electron acceptor for the enzyme in this species is believed to be ubiquinone. Couples the redox reaction to proton translocation (for every two electrons transferred, four hydrogen ions are translocated across the cytoplasmic membrane), and thus conserves the redox energy in a proton gradient. This subunit may bind ubiquinone. The polypeptide is NADH-quinone oxidoreductase subunit H (Streptomyces coelicolor (strain ATCC BAA-471 / A3(2) / M145)).